The following is a 466-amino-acid chain: ATP synthase subunit beta, sodium ion specific (466 aa).

Position 153–160 (153–160) interacts with ATP; sequence GGAGVGKT.

The protein belongs to the ATPase alpha/beta chains family. As to quaternary structure, F-type ATPases have 2 components, CF(1) - the catalytic core - and CF(0) - the membrane proton channel. CF(1) has five subunits: alpha(3), beta(3), gamma(1), delta(1), epsilon(1). CF(0) has three main subunits: a, b and c.

Its subcellular location is the cell membrane. It catalyses the reaction 4 Na(+)(in) + ATP + H2O = 4 Na(+)(out) + ADP + phosphate + H(+). With respect to regulation, inhibited by nitrate. Its function is as follows. Produces ATP from ADP in the presence of a sodium ion gradient across the membrane. The beta chain is the catalytic subunit. In Acetobacterium woodii (strain ATCC 29683 / DSM 1030 / JCM 2381 / KCTC 1655 / WB1), this protein is ATP synthase subunit beta, sodium ion specific.